A 54-amino-acid polypeptide reads, in one-letter code: Putative ATP synthase subunit epsilon, mitochondrial (54 aa).

It belongs to the eukaryotic ATPase epsilon family. In terms of assembly, F-type ATPases have 2 components, CF(1) - the catalytic core - and CF(0) - the membrane proton channel. CF(1) has five subunits: alpha(3), beta(3), gamma(1), delta(1), epsilon(1). CF(0) seems to have nine subunits: a, b, c, d, e, f, g, F6 and 8 (or A6L).

The protein localises to the mitochondrion. It is found in the mitochondrion inner membrane. In terms of biological role, mitochondrial membrane ATP synthase (F(1)F(0) ATP synthase or Complex V) produces ATP from ADP in the presence of a proton gradient across the membrane which is generated by electron transport complexes of the respiratory chain. F-type ATPases consist of two structural domains, F(1) - containing the extramembraneous catalytic core, and F(0) - containing the membrane proton channel, linked together by a central stalk and a peripheral stalk. During catalysis, ATP synthesis in the catalytic domain of F(1) is coupled via a rotary mechanism of the central stalk subunits to proton translocation. Part of the complex F(1) domain and of the central stalk which is part of the complex rotary element. Rotation of the central stalk against the surrounding alpha(3)beta(3) subunits leads to hydrolysis of ATP in three separate catalytic sites on the beta subunits. The sequence is that of Putative ATP synthase subunit epsilon, mitochondrial from Caenorhabditis elegans.